A 293-amino-acid chain; its full sequence is Homoserine kinase (293 aa).

Position 83–93 (83–93) interacts with ATP; that stretch reads PITRGMGSSSA.

The protein belongs to the GHMP kinase family. Homoserine kinase subfamily.

Its subcellular location is the cytoplasm. The enzyme catalyses L-homoserine + ATP = O-phospho-L-homoserine + ADP + H(+). Its pathway is amino-acid biosynthesis; L-threonine biosynthesis; L-threonine from L-aspartate: step 4/5. In terms of biological role, catalyzes the ATP-dependent phosphorylation of L-homoserine to L-homoserine phosphate. The sequence is that of Homoserine kinase from Helicobacter pylori (strain ATCC 700392 / 26695) (Campylobacter pylori).